Reading from the N-terminus, the 612-residue chain is Cytoplasmic dynein 1 intermediate chain 2 (612 aa).

Composition is skewed to basic and acidic residues over residues 1–13 and 20–43; these read MSDKSDLKAELER and QIREEKKRKEEERKKKETDQKKEA. The disordered stretch occupies residues 1–188; sequence MSDKSDLKAE…PHELTEEEKQ (188 aa). S2 is subject to N-acetylserine. S51 carries the post-translational modification Diphosphoserine. Phosphoserine is present on residues S51 and S84. Low complexity predominate over residues 82 to 91; the sequence is PSSKSVSTPS. Position 89 is a phosphothreonine (T89). S91, S95, and S98 each carry phosphoserine. Positions 164-188 are enriched in basic and acidic residues; sequence EKTLKKDEENDSKAPPHELTEEEKQ. WD repeat units follow at residues 251–300, 304–344, 353–394, 403–443, 448–493, 496–536, and 542–581; these read SKHR…TTPE, HCQS…RTPV, AHTH…HPQD, SKAV…AGIS, GHQG…PLYS, DNSD…EVPT, and EGNPALNRVRWTHSGREIAVGDSEGQIVIYDVGEQIAVPR.

It belongs to the dynein intermediate chain family. As to quaternary structure, homodimer. The cytoplasmic dynein 1 complex consists of two catalytic heavy chains (HCs) and a number of non-catalytic subunits presented by intermediate chains (ICs), light intermediate chains (LICs) and light chains (LCs); the composition seems to vary in respect to the IC, LIC and LC composition. The heavy chain homodimer serves as a scaffold for the probable homodimeric assembly of the respective non-catalytic subunits. The ICs and LICs bind directly to the HC dimer and the LCs assemble on the IC dimer. Interacts with DYNLT3. Interacts with DYNLT1. Interacts (dephosphorylated at Ser-84) with DCTN1. Interacts with BICD2. Interacts with SPEF2. Interacts with CFAP61. Post-translationally, the phosphorylation status of Ser-84 appears to be involved in dynactin-dependent target binding. Pyrophosphorylation by 5-diphosphoinositol pentakisphosphate (5-IP7) promotes interaction with DCTN1. Serine pyrophosphorylation is achieved by Mg(2+)-dependent, but enzyme independent transfer of a beta-phosphate from a inositol pyrophosphate to a pre-phosphorylated serine residue.

It is found in the cytoplasm. The protein resides in the cytoskeleton. Acts as one of several non-catalytic accessory components of the cytoplasmic dynein 1 complex that are thought to be involved in linking dynein to cargos and to adapter proteins that regulate dynein function. Cytoplasmic dynein 1 acts as a motor for the intracellular retrograde motility of vesicles and organelles along microtubules. The intermediate chains mediate the binding of dynein to dynactin via its 150 kDa component (p150-glued) DCTN1. Involved in membrane-transport, such as Golgi apparatus, late endosomes and lysosomes. This Mus musculus (Mouse) protein is Cytoplasmic dynein 1 intermediate chain 2 (Dync1i2).